A 358-amino-acid polypeptide reads, in one-letter code: DnaJ homolog subfamily C member 18 (358 aa).

The 65-residue stretch at 82–146 folds into the J domain; that stretch reads NYYEILGVSR…DKRLRYDEYG (65 aa). A helical membrane pass occupies residues 228 to 248; sequence AFIQLLPVLVIVIISVITQLL.

The protein resides in the endoplasmic reticulum membrane. The chain is DnaJ homolog subfamily C member 18 (DNAJC18) from Macaca fascicularis (Crab-eating macaque).